A 61-amino-acid polypeptide reads, in one-letter code: Large ribosomal subunit protein eL24 (61 aa).

Zn(2+) is bound by residues Cys-7, Cys-10, Cys-33, and Cys-37. The C4-type zinc-finger motif lies at 7 to 37 (CSFCGHEIPPGTGLMYVRNDGTILWFCSSKC).

The protein belongs to the eukaryotic ribosomal protein eL24 family. As to quaternary structure, part of the 50S ribosomal subunit. Forms a cluster with proteins L3 and L14. It depends on Zn(2+) as a cofactor.

Functionally, binds to the 23S rRNA. In Saccharolobus islandicus (strain Y.N.15.51 / Yellowstone #2) (Sulfolobus islandicus), this protein is Large ribosomal subunit protein eL24.